A 360-amino-acid polypeptide reads, in one-letter code: Phenylalanine--tRNA ligase alpha subunit (360 aa).

Residue Glu-260 coordinates Mg(2+).

This sequence belongs to the class-II aminoacyl-tRNA synthetase family. Phe-tRNA synthetase alpha subunit type 1 subfamily. Tetramer of two alpha and two beta subunits. It depends on Mg(2+) as a cofactor.

It localises to the cytoplasm. It carries out the reaction tRNA(Phe) + L-phenylalanine + ATP = L-phenylalanyl-tRNA(Phe) + AMP + diphosphate + H(+). This is Phenylalanine--tRNA ligase alpha subunit from Afipia carboxidovorans (strain ATCC 49405 / DSM 1227 / KCTC 32145 / OM5) (Oligotropha carboxidovorans).